The following is a 668-amino-acid chain: Macrolide export ATP-binding/permease protein MacB 1/2 (668 aa).

The ABC transporter domain occupies 9–247 (IRLRGVGREY…PGPGPAQAPQ (239 aa)). 45-52 (GASGSGKS) is a binding site for ATP. Residues 230-257 (RTGAPAADPGPGPAQAPQPAPQPAPVQA) are disordered. A compositionally biased stretch (pro residues) spans 237–255 (DPGPGPAQAPQPAPQPAPV). 4 consecutive transmembrane segments (helical) span residues 294 to 314 (FLTM…VALG), 541 to 561 (LALL…IGVM), 598 to 618 (LVCV…GLAF), and 634 to 654 (MLAA…LPAV).

This sequence belongs to the ABC transporter superfamily. Macrolide exporter (TC 3.A.1.122) family. Homodimer.

The protein localises to the cell inner membrane. Non-canonical ABC transporter that contains transmembrane domains (TMD), which form a pore in the inner membrane, and an ATP-binding domain (NBD), which is responsible for energy generation. Confers resistance against macrolides. This chain is Macrolide export ATP-binding/permease protein MacB 1/2, found in Paracoccus denitrificans (strain Pd 1222).